A 153-amino-acid polypeptide reads, in one-letter code: Small ribosomal subunit protein bS16 (153 aa).

Residues alanine 121 to alanine 131 are compositionally biased toward basic and acidic residues. Positions alanine 121–aspartate 153 are disordered. Residues alanine 140–aspartate 153 are compositionally biased toward acidic residues.

The protein belongs to the bacterial ribosomal protein bS16 family.

This is Small ribosomal subunit protein bS16 from Bifidobacterium longum (strain DJO10A).